We begin with the raw amino-acid sequence, 350 residues long: Alcohol dehydrogenase (350 aa).

A Zn(2+)-binding site is contributed by Cys-46. NAD(+) contacts are provided by His-47, Thr-48, and His-51. Zn(2+) contacts are provided by His-69, Cys-100, Cys-103, Cys-106, Cys-114, and Cys-156. NAD(+)-binding residues include Gly-183, Gly-184, Leu-185, and Asp-204. Thr-205 carries the post-translational modification Phosphothreonine. The NAD(+) site is built by Lys-209 and Phe-224. Residue Thr-250 is modified to Phosphothreonine. Residues Val-271, Met-273, Ser-296, Val-298, and Arg-343 each contribute to the NAD(+) site.

Belongs to the zinc-containing alcohol dehydrogenase family. In terms of assembly, homotetramer. The cofactor is Zn(2+).

It localises to the cytoplasm. The catalysed reaction is a primary alcohol + NAD(+) = an aldehyde + NADH + H(+). It carries out the reaction a secondary alcohol + NAD(+) = a ketone + NADH + H(+). It catalyses the reaction ethanol + NAD(+) = acetaldehyde + NADH + H(+). Functionally, reduces acetaldehyde to ethanol during the fermentation of glucose. The chain is Alcohol dehydrogenase (adh1) from Schizosaccharomyces pombe (strain 972 / ATCC 24843) (Fission yeast).